Consider the following 463-residue polypeptide: MSDQSNQKELLWQSRFSEPFDREALKFSSSVHVDGLLYREDIQGSIAHATMLGEQGIISKEEAGQIVTGLKAVEKEIESGELTPVWEDEDIHTVIENRLKELIGPTAGKLHSGRSRNDQVATDTRLYLRRNIDRIGELLKAMQSTLLDKAEQYKHTIMFGYTHLQRAQPISAGHYYMAWHSMFGRDAQRLADLRKRANISPLGAAAFAGSTLPLDPARSAELLEFDGVFTNSIDAVSDRDLVIEFVSACSMIMMHLSRFSEDVILWSSAEFNYLSISDAFATGSSIMPQKKNADIAELVRGKTGRVYGNLMNLLTIMKGLPLSYNRDMQEDKPPLFDTAETTASSLSVFRRMIEKTWLNEERLARLTAEDLSLATEIAEYLVKKQIPFRDAHRITGKIVAYAIEQGKTLPTISLDEYRTFSEAFDEGIYDDLKPDASVNSKKTAGSCSFKSVEEQIARAKAAR.

It belongs to the lyase 1 family. Argininosuccinate lyase subfamily.

It localises to the cytoplasm. The catalysed reaction is 2-(N(omega)-L-arginino)succinate = fumarate + L-arginine. It participates in amino-acid biosynthesis; L-arginine biosynthesis; L-arginine from L-ornithine and carbamoyl phosphate: step 3/3. This is Argininosuccinate lyase from Chlorobaculum tepidum (strain ATCC 49652 / DSM 12025 / NBRC 103806 / TLS) (Chlorobium tepidum).